Reading from the N-terminus, the 705-residue chain is p-hydroxybenzoic acid--AMP ligase FadD22 (705 aa).

The region spanning 541–619 (ERQRLVVDAV…GLAQYLEAEL (79 aa)) is the Carrier domain. O-(pantetheine 4'-phosphoryl)serine is present on Ser579.

It belongs to the ATP-dependent AMP-binding enzyme family.

It catalyses the reaction holo-[4-hydroxyphenylalkanoate synthase] + 4-hydroxybenzoate + ATP = 4-hydroxyphenyl-[4-hydroxyphenylalkanoate synthase] + AMP + diphosphate. Its pathway is lipid metabolism; fatty acid biosynthesis. Functionally, catalyzes the adenylation of p-hydroxybenzoic acid (pHBA) to form p-hydroxybenzoic acid-AMP (pHBA-AMP), which is converted directly to p-hydroxybenzoyl-S-FadD22 (pHBA-S-FAdD22) thioester intermediate in a CoA-independent manner by attack of the phosphopantetheine thiol of FadD22. Usually, this intermediate primes the biosynthesis of the phenolphthiocerol (PPOL) by presenting the pHBA starter unit for elongation by Pks15/1, but M.tuberculosis lacks Pks15/1 due to a natural frameshift and thus is unable to produce PPOL. The sequence is that of p-hydroxybenzoic acid--AMP ligase FadD22 (fadD22) from Mycobacterium tuberculosis (strain CDC 1551 / Oshkosh).